The sequence spans 1068 residues: Carbamoyl phosphate synthase large chain (1068 aa).

Residues 1 to 401 are carboxyphosphate synthetic domain; it reads MPRNNDIKKV…ALMKAIRSLE (401 aa). ATP contacts are provided by R129, R169, G175, G176, R208, I210, E215, G241, V242, H243, Q284, and E298. Residues 133–327 enclose the ATP-grasp 1 domain; it reads KDTMEKIGEP…IAKVTAKIAL (195 aa). Mg(2+)-binding residues include Q284, E298, and N300. Mn(2+) is bound by residues Q284, E298, and N300. The oligomerization domain stretch occupies residues 402-546; sequence QHVDSLMSYD…YSVFGSENEA (145 aa). Positions 547–930 are carbamoyl phosphate synthetic domain; it reads AETNPQKKVL…ALYKAFEGAG (384 aa). The ATP-grasp 2 domain occupies 672–862; it reads DEILQKTGIP…IVDLAARIIM (191 aa). The ATP site is built by R708, K747, L749, E753, G778, V779, H780, S781, Q821, and E833. Residues Q821, E833, and N835 each coordinate Mg(2+). Mn(2+) contacts are provided by Q821, E833, and N835. The MGS-like domain occupies 931 to 1068; sequence VELPKYKQMI…PVDIATVKNL (138 aa). The allosteric domain stretch occupies residues 931–1068; it reads VELPKYKQMI…PVDIATVKNL (138 aa).

Belongs to the CarB family. In terms of assembly, composed of two chains; the small (or glutamine) chain promotes the hydrolysis of glutamine to ammonia, which is used by the large (or ammonia) chain to synthesize carbamoyl phosphate. Tetramer of heterodimers (alpha,beta)4. Mg(2+) serves as cofactor. Mn(2+) is required as a cofactor.

It catalyses the reaction hydrogencarbonate + L-glutamine + 2 ATP + H2O = carbamoyl phosphate + L-glutamate + 2 ADP + phosphate + 2 H(+). The catalysed reaction is hydrogencarbonate + NH4(+) + 2 ATP = carbamoyl phosphate + 2 ADP + phosphate + 2 H(+). It participates in amino-acid biosynthesis; L-arginine biosynthesis; carbamoyl phosphate from bicarbonate: step 1/1. The protein operates within pyrimidine metabolism; UMP biosynthesis via de novo pathway; (S)-dihydroorotate from bicarbonate: step 1/3. Functionally, large subunit of the glutamine-dependent carbamoyl phosphate synthetase (CPSase). CPSase catalyzes the formation of carbamoyl phosphate from the ammonia moiety of glutamine, carbonate, and phosphate donated by ATP, constituting the first step of 2 biosynthetic pathways, one leading to arginine and/or urea and the other to pyrimidine nucleotides. The large subunit (synthetase) binds the substrates ammonia (free or transferred from glutamine from the small subunit), hydrogencarbonate and ATP and carries out an ATP-coupled ligase reaction, activating hydrogencarbonate by forming carboxy phosphate which reacts with ammonia to form carbamoyl phosphate. This chain is Carbamoyl phosphate synthase large chain, found in Agathobacter rectalis (strain ATCC 33656 / DSM 3377 / JCM 17463 / KCTC 5835 / VPI 0990) (Eubacterium rectale).